A 727-amino-acid polypeptide reads, in one-letter code: Two-component response regulator-like APRR7 (727 aa).

The interval 1 to 47 (MNANEEGEGSRYPITDRKTGETKFDRVESRTEKHSEEEKTNGITMDV) is disordered. A compositionally biased stretch (basic and acidic residues) spans 14-40 (ITDRKTGETKFDRVESRTEKHSEEEKT). One can recognise a Response regulatory domain in the interval 79–197 (RVLLVENDDC…ELKILWQHVW (119 aa)). Disordered stretches follow at residues 203–265 (SSGS…KKAV), 291–312 (NPEF…QEHD), 339–416 (KDEP…KTLD), 464–487 (SRYN…SLQD), 509–560 (ESLP…QPLP), and 606–670 (VNGS…SQRE). Positions 246–259 (ASDGSSDGSGAQSS) are enriched in low complexity. Composition is skewed to polar residues over residues 344 to 353 (SKTTGIMRQD), 467 to 487 (NPAS…SLQD), and 519 to 535 (VGSN…NNAF). Positions 538–555 (PGAPKVSSAGSSSVKHSS) are enriched in low complexity. Over residues 641 to 657 (GKNGNGDGSGSGSGSGS) the composition is skewed to gly residues. One can recognise a CCT domain in the interval 669-711 (REAALTKFRQKRKERCFRKKVRYQSRKKLAEQRPRVRGQFVRK).

Belongs to the ARR-like family. Post-translationally, phosphorylated. Phosphorylation varies throughout the diurnal cycle.

Its subcellular location is the nucleus. Transcriptional repressor of CCA1 and LHY, and positive regulator of LWD1 and LWD2 expression. Represses the expression of other clock proteins and master regulators of plant growth, development and response to abiotic stress. Involved in the positive and negative feedback loops of the circadian clock. Controls photoperiodic flowering response and temperature compensation. Expression of several members of the ARR-like family is controlled by circadian rhythm. APRR9, APRR7, and APRR5 coordinately act on the upstream region of the target genes to repress their expression from noon until midnight. The particular coordinated sequential expression of APRR9, APRR7, APRR5, APRR3 and APPR1 result to circadian waves that may be at the basis of the endogenous circadian clock. The sequence is that of Two-component response regulator-like APRR7 (APRR7) from Arabidopsis thaliana (Mouse-ear cress).